We begin with the raw amino-acid sequence, 835 residues long: Transcription intermediary factor 1-beta (835 aa).

A compositionally biased stretch (low complexity) spans 1-19 (MAASAAAASAAAASAASGS). Residues 1-49 (MAASAAAASAAAASAASGSPGPGEGSAGGEKRSTAPSAAASASASAAAS) form a disordered region. Residue alanine 2 is modified to N-acetylalanine. Serine 19 and serine 26 each carry phosphoserine. Lysine 31 is covalently cross-linked (Glycyl lysine isopeptide (Lys-Gly) (interchain with G-Cter in SUMO2)). Low complexity predominate over residues 35–49 (APSAAASASASAAAS). Serine 50 carries the post-translational modification Phosphoserine. The RING-type zinc-finger motif lies at 65–121 (CGVCRERLRPEREPRLLPCLHSACSACLGPAAPAAANSSGDGGAAGDGTVVDCPVCK). The interval 65-376 (CGVCRERLRP…LIYFQLHRAL (312 aa)) is RBCC domain. A Glycyl lysine isopeptide (Lys-Gly) (interchain with G-Cter in SUMO2) cross-link involves residue lysine 127. Serine 138 bears the Phosphoserine mark. The segment at 148–195 (DANQCCTSCEDNAPATSYCVECSEPLCETCVEAHQRVKYTKDHTVRST) adopts a B box-type 1; atypical zinc-finger fold. 4 residues coordinate Zn(2+): cysteine 153, cysteine 156, cysteine 177, and histidine 181. A Glycyl lysine isopeptide (Lys-Gly) (interchain with G-Cter in SUMO2) cross-link involves residue lysine 199. Residues 204–245 (ERTVYCNVHKHEPLVLFCESCDTLTCRDCQLNAHKDHQYQFL) form a B box-type 2 zinc finger. Zn(2+) is bound by residues cysteine 209, histidine 212, cysteine 232, and histidine 237. Residues 246 to 376 (EDAVRNQRKL…LIYFQLHRAL (131 aa)) are leucine zipper alpha helical coiled-coil region. Residues 247–376 (DAVRNQRKLL…LIYFQLHRAL (130 aa)) are interaction with MAGEC2. Glycyl lysine isopeptide (Lys-Gly) (interchain with G-Cter in SUMO2) cross-links involve residues lysine 254 and lysine 261. Lysine 266 is modified (N6-acetyllysine). A Glycyl lysine isopeptide (Lys-Gly) (interchain with G-Cter in SUMO2) cross-link involves residue lysine 272. Position 304 is an N6-acetyllysine; alternate (lysine 304). Residue lysine 304 forms a Glycyl lysine isopeptide (Lys-Gly) (interchain with G-Cter in SUMO2); alternate linkage. Lysine 319 participates in a covalent cross-link: Glycyl lysine isopeptide (Lys-Gly) (interchain with G-Cter in SUMO2). The residue at position 340 (lysine 340) is an N6-acetyllysine. Lysine 366 is covalently cross-linked (Glycyl lysine isopeptide (Lys-Gly) (interchain with G-Cter in SUMO2)). Residues 366-370 (KLIYF) form an involved in binding PPP1CA region. Residue lysine 377 is modified to N6-acetyllysine; alternate. A Glycyl lysine isopeptide (Lys-Gly) (interchain with G-Cter in SUMO2); alternate cross-link involves residue lysine 377. A Glycyl lysine isopeptide (Lys-Gly) (interchain with G-Cter in SUMO1); alternate cross-link involves residue lysine 377. Lysine 407 participates in a covalent cross-link: Glycyl lysine isopeptide (Lys-Gly) (interchain with G-Cter in SUMO2). Residues 411–480 (ERPGTNSTGP…SRSGEGEVSG (70 aa)) form a disordered region. Serine 417 carries the post-translational modification Phosphoserine. Residue lysine 434 forms a Glycyl lysine isopeptide (Lys-Gly) (interchain with G-Cter in SUMO2) linkage. Residues 434-443 (KQGSGSSQPM) show a composition bias toward polar residues. Phosphoserine is present on residues serine 437, serine 439, and serine 453. Lysine 469 is covalently cross-linked (Glycyl lysine isopeptide (Lys-Gly) (interchain with G-Cter in SUMO2); alternate). Lysine 469 participates in a covalent cross-link: Glycyl lysine isopeptide (Lys-Gly) (interchain with G-Cter in SUMO1); alternate. Arginine 470 is modified (citrulline). Position 471 is a phosphoserine (serine 471). Position 472 is a citrulline (arginine 472). Phosphoserine occurs at positions 473, 479, and 489. The tract at residues 476–513 (GEVSGLMRKVPRVSLERLDLDLTADSQPPVFKVFPGST) is HP1 box. A PxVxL motif motif is present at residues 481–494 (LMRKVPRVSLERLD). Threonine 498 is subject to Phosphothreonine. Phosphoserine is present on serine 501. Lysine 507 is covalently cross-linked (Glycyl lysine isopeptide (Lys-Gly) (interchain with G-Cter in SUMO2)). Threonine 541 is modified (phosphothreonine). Lysine 554 is covalently cross-linked (Glycyl lysine isopeptide (Lys-Gly) (interchain with G-Cter in SUMO2); alternate). Lysine 554 is covalently cross-linked (Glycyl lysine isopeptide (Lys-Gly) (interchain with G-Cter in SUMO); alternate). Lysine 575 participates in a covalent cross-link: Glycyl lysine isopeptide (Lys-Gly) (interchain with G-Cter in SUMO2). Positions 584-618 (GPGAEGPRLASPSGSTSSGLEVVAPEGTSAPGGGP) are disordered. Serine 594 is modified (phosphoserine). The PHD-type zinc finger occupies 625 to 672 (ATICRVCQKPGDLVMCNQCEFCFHLDCHLPALQDVPGEEWSCSLCHVL). Lysine 676 is covalently cross-linked (Glycyl lysine isopeptide (Lys-Gly) (interchain with G-Cter in SUMO)). A phosphoserine mark is found at serine 683, serine 689, and serine 697. The Bromo domain maps to 695–799 (KLSPANQRKC…RFFETRMNEA (105 aa)). Lysine 750 participates in a covalent cross-link: Glycyl lysine isopeptide (Lys-Gly) (interchain with G-Cter in SUMO2); alternate. Lysine 750 participates in a covalent cross-link: Glycyl lysine isopeptide (Lys-Gly) (interchain with G-Cter in SUMO1); alternate. Residue lysine 750 forms a Glycyl lysine isopeptide (Lys-Gly) (interchain with G-Cter in SUMO); alternate linkage. Serine 752 is modified (phosphoserine). Residue tyrosine 755 is modified to Phosphotyrosine. The residue at position 757 (serine 757) is a Phosphoserine. Residues lysine 770, lysine 774, and lysine 779 each carry the N6-acetyllysine; alternate modification. Glycyl lysine isopeptide (Lys-Gly) (interchain with G-Cter in SUMO2); alternate cross-links involve residues lysine 770, lysine 774, and lysine 779. Lysine 779 is covalently cross-linked (Glycyl lysine isopeptide (Lys-Gly) (interchain with G-Cter in SUMO1); alternate). Residue serine 784 is modified to Phosphoserine. Lysine 804 participates in a covalent cross-link: Glycyl lysine isopeptide (Lys-Gly) (interchain with G-Cter in SUMO2); alternate. Residue lysine 804 forms a Glycyl lysine isopeptide (Lys-Gly) (interchain with G-Cter in SUMO); alternate linkage. A disordered region spans residues 815 to 835 (MSLPGAGLSSQELSGGPGDGP). Phosphoserine; by ATM and ATR and dsDNA kinase is present on serine 824.

It belongs to the TRIM/RBCC family. In terms of assembly, interacts with SETX. Oligomer; the RBCC domain homotrimerizes and interacts with one molecule of KRAB to form the KRAB-KAP1 corepressor complex. Binding to a KRAB domain is an absolute requirement for silencing gene expression. Interacts with CEBPB and NR3C1. Interacts with a number of KRAB-ZFP proteins including ZNF10, ZFP53, ZFP68, ZNF382 and ZNF256. Interacts with NCOR1, NR3C1 and CHD3. Interacts with CEBPB (via the RING-type and PHD-type zinc fingers). Component of a ternary complex that includes TRIM28, a HP1 protein (CBX1, CBX3 OR CBX5), a KRAB domain-containing protein, and DNA. Interacts with CBX5 (via the PxVxL motif); the interaction occurs in interphase nuclei and competes for binding POGZ. Interacts with POGZ; the interaction competes for interaction with CBX5. Interacts with SETDB1; the interaction is enhanced by KAP1 sumoylation, stimulates SETDB1 histone methyltransferase activity and gene silencing. Interacts (via the PHD-type zinc finger) with UBE2I; the interaction is required for sumoylation and repressor activity. Component of the TRIM28/KAP1-ERBB4-MDM2 complex involved in connecting growth factor and DNA damage responses. Interacts directly with ERBB4; the interaction represses ERBB4-mediated transcription activity. Interacts with MDM2; the interaction contributes to p53/TP53 inactivation. Component of the TRIM28/KAP1-MDM2-p53/TP53; involved in regulating p53/TP53 stabilization and activity. Interacts (via the leucine zipper alpha helical coiled-coil) with E2F1 (central region); the interaction inhibits E2F1 acetylation and transcriptional activity. Interacts with PPP1CA; the interaction dephosphorylates TRIM28 at Ser-824 and forms a complex at the p21 promoter site. Interacts with PPP1CB; the interaction is weak but is increased on dephosphorylation at Ser-824. Interacts with FES/FPS. Interacts with SMARCAD1. Interacts with, and sumoylates IRF7. Interacts with MAGEC2. Part of a complex composed of TRIM28, HDAC1, HDAC2 and EHMT2. Interacts with AICDA. Interacts (via the RBCC domain) with KOX1 (via the KRAB domain), ZNF268 (via the KRAB domain) and ZNF300 (via the KRAB domain); the interactions increase KOX1, ZNF268 and ZNF300 nuclear localization activities. The large PER complex involved in the histone methylation is composed of at least PER2, CBX3, TRIM28, SUV39H1 and/or SUV39H2; CBX3 mediates the formation of the complex. Interacts with isoform 2 of ZFP90. Forms a complex with FOXP3 in the presence of isoform 2 of ZFP90. Interacts with NR4A3; the interactions potentiates NR4A3 activity on NurRE promoter. Interacts (unphosphorylated or phosphorylated form) with ZBTB1 (via BTB domain). Probably part of a corepressor complex containing ZNF304, TRIM28, SETDB1 and DNMT1. Interacts with ATRX. Forms a complex with ATRX, SETDB1 and ZNF274. Interacts with ZFP568; the interaction mediates ZFP568 transcriptional repression activity. Interacts with RRP1B. Interacts with CRY1. Interacts with ZNF263; recruited to the SIX3 promoter along with other proteins involved in chromatin modification and transcriptional corepression where it contributes to transcriptional repression. Interacts with CYREN (via XLF motif). Interacts with TRIM17; this interaction prevents TRIM28 activity. Interacts with ZNF746. Interacts with PHF13. Interacts with ZNF354C. Interacts with ZNF432; the interaction is independent of PARP1. As to quaternary structure, (Microbial infection) Interacts with herpes virus 8 protein LANA1; this interaction facilitates establishment of viral latency. In terms of processing, ATM-induced phosphorylation on Ser-824 represses sumoylation leading to the de-repression of expression of a subset of genes involved in cell cycle control and apoptosis in response to genotoxic stress. Dephosphorylation by the phosphatases, PPP1CA and PP1CB forms, allows sumoylation and expression of TRIM28 target genes. Post-translationally, sumoylation/desumoylation events regulate TRIM28-mediated transcriptional repression. Sumoylation is required for interaction with CHD3 and SETDB1 and the corepressor activity. Represses and is repressed by Ser-824 phosphorylation. Enhances the TRIM28 corepressor activity, inhibiting transcriptional activity of a number of genes including GADD45A and CDKN1A/p21. Lys-554, Lys-779 and Lys-804 are the major sites of sumoylation. In response to Dox-induced DNA damage, enhanced phosphorylation on Ser-824 prevents sumoylation and allows de-repression of CDKN1A/p21. Auto-ubiquitinated; enhanced by MAGEA2 and MAGEC2. In terms of processing, citrullinated by PADI4. Post-translationally, ADP-ribosylated by SIRT6, promoting TRIM28/KAP1 interaction with CBX5, thereby contributing to the packaging of LINE-1 retrotransposon elements into transcriptionally repressive heterochromatin. Expressed in all tissues tested including spleen, thymus, prostate, testis, ovary, small intestine, colon and peripheral blood leukocytes.

The protein localises to the nucleus. The catalysed reaction is S-ubiquitinyl-[E2 ubiquitin-conjugating enzyme]-L-cysteine + [acceptor protein]-L-lysine = [E2 ubiquitin-conjugating enzyme]-L-cysteine + N(6)-ubiquitinyl-[acceptor protein]-L-lysine.. It functions in the pathway protein modification; protein sumoylation. Its function is as follows. Nuclear corepressor for KRAB domain-containing zinc finger proteins (KRAB-ZFPs). Mediates gene silencing by recruiting CHD3, a subunit of the nucleosome remodeling and deacetylation (NuRD) complex, and SETDB1 (which specifically methylates histone H3 at 'Lys-9' (H3K9me)) to the promoter regions of KRAB target genes. Enhances transcriptional repression by coordinating the increase in H3K9me, the decrease in histone H3 'Lys-9 and 'Lys-14' acetylation (H3K9ac and H3K14ac, respectively) and the disposition of HP1 proteins to silence gene expression. Recruitment of SETDB1 induces heterochromatinization. May play a role as a coactivator for CEBPB and NR3C1 in the transcriptional activation of ORM1. Also a corepressor for ERBB4. Inhibits E2F1 activity by stimulating E2F1-HDAC1 complex formation and inhibiting E2F1 acetylation. May serve as a partial backup to prevent E2F1-mediated apoptosis in the absence of RB1. Important regulator of CDKN1A/p21(CIP1). Has E3 SUMO-protein ligase activity toward itself via its PHD-type zinc finger. Also specifically sumoylates IRF7, thereby inhibiting its transactivation activity. Ubiquitinates p53/TP53 leading to its proteasomal degradation; the function is enhanced by MAGEC2 and MAGEA2, and possibly MAGEA3 and MAGEA6. Mediates the nuclear localization of KOX1, ZNF268 and ZNF300 transcription factors. In association with isoform 2 of ZFP90, is required for the transcriptional repressor activity of FOXP3 and the suppressive function of regulatory T-cells (Treg). Probably forms a corepressor complex required for activated KRAS-mediated promoter hypermethylation and transcriptional silencing of tumor suppressor genes (TSGs) or other tumor-related genes in colorectal cancer (CRC) cells. Required to maintain a transcriptionally repressive state of genes in undifferentiated embryonic stem cells (ESCs). In ESCs, in collaboration with SETDB1, is also required for H3K9me3 and silencing of endogenous and introduced retroviruses in a DNA-methylation independent-pathway. Associates at promoter regions of tumor suppressor genes (TSGs) leading to their gene silencing. The SETDB1-TRIM28-ZNF274 complex may play a role in recruiting ATRX to the 3'-exons of zinc-finger coding genes with atypical chromatin signatures to establish or maintain/protect H3K9me3 at these transcriptionally active regions. Functionally, (Microbial infection) Plays a critical role in the shutdown of lytic gene expression during the early stage of herpes virus 8 primary infection. This inhibition is mediated through interaction with herpes virus 8 protein LANA1. The protein is Transcription intermediary factor 1-beta of Homo sapiens (Human).